The primary structure comprises 70 residues: DNA-directed RNA polymerase subunit omega (70 aa).

This sequence belongs to the RNA polymerase subunit omega family. As to quaternary structure, the RNAP catalytic core consists of 2 alpha, 1 beta, 1 beta' and 1 omega subunit. When a sigma factor is associated with the core the holoenzyme is formed, which can initiate transcription.

The enzyme catalyses RNA(n) + a ribonucleoside 5'-triphosphate = RNA(n+1) + diphosphate. Promotes RNA polymerase assembly. Latches the N- and C-terminal regions of the beta' subunit thereby facilitating its interaction with the beta and alpha subunits. The chain is DNA-directed RNA polymerase subunit omega from Bacillus cereus (strain B4264).